The chain runs to 185 residues: ATP-dependent protease subunit HslV (185 aa).

The active site involves threonine 13. Na(+) is bound by residues glycine 167, cysteine 170, and threonine 173.

Belongs to the peptidase T1B family. HslV subfamily. As to quaternary structure, a double ring-shaped homohexamer of HslV is capped on each side by a ring-shaped HslU homohexamer. The assembly of the HslU/HslV complex is dependent on binding of ATP.

It localises to the cytoplasm. The catalysed reaction is ATP-dependent cleavage of peptide bonds with broad specificity.. Allosterically activated by HslU binding. Functionally, protease subunit of a proteasome-like degradation complex believed to be a general protein degrading machinery. In Sinorhizobium fredii (strain NBRC 101917 / NGR234), this protein is ATP-dependent protease subunit HslV.